An 846-amino-acid chain; its full sequence is SLIT and NTRK-like protein 2 (846 aa).

A signal peptide spans 1-21 (MLSGVWFLSVLTVAGILQTES). The Extracellular portion of the chain corresponds to 22 to 622 (RKTAKDICKI…LHTEVPLSVL (601 aa)). 2 cysteine pairs are disulfide-bonded: C29–C35 and C33–C46. 6 LRR repeats span residues 63–84 (RIYQ…EFVN), 87–108 (NAVT…AFSG), 111–132 (TLKR…TFLG), 135–156 (SLEY…AFSK), 159–180 (KLKV…VFRF), and 182–203 (LLTH…GVLE). The N-linked (GlcNAc...) asparagine glycan is linked to N84. The segment at 167–215 (DNLLLSLPSNVFRFVLLTHLDLRGNRLKVMPFAGVLEHIGGIMEIQLEE) is required for interaction with PTPRD. An LRRCT 1 domain is found at 216 to 265 (NPWNCTCDLLPLKAWLDTITVFVGEIVCETPFRLHGKDVTQLTRQDLCPR). N219 carries N-linked (GlcNAc...) asparagine glycosylation. Intrachain disulfides connect C220–C243 and C222–C263. A disordered region spans residues 261–322 (DLCPRKSASG…TPRVTVSKDR (62 aa)). Composition is skewed to low complexity over residues 267-276 (SASGDSSQRS) and 285-300 (RLTP…TRAP). Positions 332-374 (QTKSPVALTCPSSCVCTSQSSDNGLNVNCQERKFTNISDLQPK) constitute an LRRNT domain. LRR repeat units follow at residues 377–398 (SPKK…DLLE), 401–422 (SLDL…AFTN), 425–446 (SLRR…MFDG), 449–470 (SLQY…TFDA), 473–494 (NLQL…IFGG), and 496–517 (ALTR…GVLD). The N-linked (GlcNAc...) asparagine glycan is linked to N422. The region spanning 530–581 (NPWDCTCDIMGLKDWTEHANSPVIINEVTCESPAKHAGEILKFLGREAICPE) is the LRRCT 2 domain. The helical transmembrane segment at 623-643 (ILGLLVVFILSVCFGAGLFVF) threads the bilayer. The Cytoplasmic segment spans residues 644–846 (VLKRRKGVPN…LEKQTAISQL (203 aa)). A Phosphotyrosine modification is found at Y757.

Belongs to the SLITRK family. As to quaternary structure, interacts with PTPRD; this interaction is PTPRD splicing-dependent and may induce pre-synaptic differentiation. Interacts with NTRK2. In the adult, significant expression is detected only in the brain. Broadly expressed in embryonic brain with highest expression in ventricular layer, subventricular zone, cortical plate, pyramidal layer of hippocampus, subicular neuroepithelium, thalamus, hypothalamus and spinal cord.

The protein localises to the membrane. The protein resides in the cell membrane. It is found in the cell projection. It localises to the dendrite. In terms of biological role, it is involved in synaptogenesis. Promotes excitatory synapse differentiation. Suppresses neurite outgrowth. Involved in the negative regulation of NTRK2. This is SLIT and NTRK-like protein 2 (Slitrk2) from Mus musculus (Mouse).